The following is a 703-amino-acid chain: ABC transporter G family member 11 (703 aa).

Residues 50 to 293 (LTWQDLTVMV…FAQAGFPCPA (244 aa)) form the ABC transporter domain. 87-94 (GPSGSGKS) lines the ATP pocket. The region spanning 382-594 (LQTYTLTKRS…ALQGQYQNDL (213 aa)) is the ABC transmembrane type-2 domain. N-linked (GlcNAc...) asparagine glycosylation occurs at N394. 6 consecutive transmembrane segments (helical) span residues 406–426 (LLIY…VGTS), 436–456 (CASF…PSFV), 485–505 (TPFL…MVGL), 513–533 (LFFV…MMAI), 540–560 (FLMG…VSGF), and 628–648 (INLS…FIMI). Residues N671 and N675 are each glycosylated (N-linked (GlcNAc...) asparagine). S688 is modified (phosphoserine).

Belongs to the ABC transporter superfamily. ABCG family. Eye pigment precursor importer (TC 3.A.1.204) subfamily. In terms of assembly, homodimer. Forms heterodimers with ABCG9, ABCG12 and ABCG14 in epidermal cells. In terms of tissue distribution, expressed in seedlings, roots, stems, leaves, flowers, and siliques, mostly in epidermis, trichomes, vasculatures and developing tissues. Follows an uniparental maternal expression in the seed, thus being the product of a maternally expressed imprinted gene. Accumulates in the phloem. Transcripts seem to be transported from shoots to roots.

It localises to the cell membrane. Its function is as follows. Required for the cuticle, root suberin and pollen coat development by controlling cutin and maybe wax transport to the extracellular matrix. Involved in developmental plasticity and stress responses. Together with ABCG9 and ABCG14, required for vascular development by regulating lipid/sterol homeostasis. May be a transporter of lignin precursors during tracheary element differentiation. The sequence is that of ABC transporter G family member 11 from Arabidopsis thaliana (Mouse-ear cress).